A 332-amino-acid polypeptide reads, in one-letter code: Leucine carboxyl methyltransferase 1 homolog (332 aa).

Residues Lys22, Arg57, Gly83, Asp107, 153 to 154 (DL), and Glu180 contribute to the S-adenosyl-L-methionine site.

It belongs to the methyltransferase superfamily. LCMT family.

It localises to the cytoplasm. The protein resides in the membrane. It catalyses the reaction [phosphatase 2A protein]-C-terminal L-leucine + S-adenosyl-L-methionine = [phosphatase 2A protein]-C-terminal L-leucine methyl ester + S-adenosyl-L-homocysteine. Functionally, methylates the carboxyl group of the C-terminal leucine residue of protein phosphatase 2A (PP2A) catalytic subunits to form alpha-leucine ester residues. Involved in brassinosteroid (BR) signaling. Plays a negative role in BR signaling pathway. Functions as a positive regulator of BRI1 receptor-kinase degradation. Methylates PP2A, thus facilitating its association with activated BRI1. This leads to receptor dephosphorylation and degradation, and thus to the termination of BR signaling. May act upstream of ASK7/BIN2. Involved in methylation of PP2A during environmental stress responses. The chain is Leucine carboxyl methyltransferase 1 homolog from Arabidopsis thaliana (Mouse-ear cress).